Reading from the N-terminus, the 626-residue chain is Putative L-type lectin-domain containing receptor kinase V.8 (626 aa).

Positions 1–21 are cleaved as a signal peptide; that stretch reads MPSELKVLHIVLVLLYTLSSS. The interval 22 to 212 is legume-lectin like; sequence TYNSNGNWTL…SIGAFHYMLS (191 aa). Residues 22-245 are Extracellular-facing; it reads TYNSNGNWTL…PKKSSDRTKK (224 aa). 4 N-linked (GlcNAc...) asparagine glycosylation sites follow: N28, N59, N112, and N162. The chain crosses the membrane as a helical span at residues 246-266; it reads ILAVCLTLAVFAVFVASGICF. Residues 267–626 are Cytoplasmic-facing; sequence VFYTRHKKVK…LTNSFLSHGR (360 aa). The Protein kinase domain occupies 303–562; that stretch reads FKEKQLLGKG…GLLCAHHTEL (260 aa). Residues 309-317 and K332 contribute to the ATP site; that span reads LGKGGFGQV. D429 acts as the Proton acceptor in catalysis.

It in the C-terminal section; belongs to the protein kinase superfamily. Ser/Thr protein kinase family. The protein in the N-terminal section; belongs to the leguminous lectin family.

The protein localises to the cell membrane. It carries out the reaction L-seryl-[protein] + ATP = O-phospho-L-seryl-[protein] + ADP + H(+). It catalyses the reaction L-threonyl-[protein] + ATP = O-phospho-L-threonyl-[protein] + ADP + H(+). The chain is Putative L-type lectin-domain containing receptor kinase V.8 (LECRK58) from Arabidopsis thaliana (Mouse-ear cress).